The primary structure comprises 274 residues: Beta-lactamase OXA-9 (274 aa).

The signal sequence occupies residues 1-24 (MKKILLLHMLVFVSATLPISSVAS). Serine 58 serves as the catalytic Acyl-ester intermediate. Position 61 is an N6-carboxylysine (lysine 61). A substrate-binding site is contributed by 206–208 (KSG).

Belongs to the class-D beta-lactamase family.

It carries out the reaction a beta-lactam + H2O = a substituted beta-amino acid. In terms of biological role, oxacillin-hydrolyzing beta-lactamase. Confers resistance to beta-lactam antibiotics but at a significantly lower level than the TEM bla gene product. This Klebsiella aerogenes (Enterobacter aerogenes) protein is Beta-lactamase OXA-9 (bla).